The following is a 323-amino-acid chain: Sodium/potassium-transporting ATPase subunit beta-2 (323 aa).

Residues 1-50 (MPTITEDCIDGFQQYYSRPPERPKKKSLKQMVYDSEDNSYFGRSMDSWAK) are Cytoplasmic-facing. Residues 51-71 (IGIFYVAFYGVLAALVAICMW) traverse the membrane as a helical; Signal-anchor for type II membrane protein segment. Residues 72 to 323 (AFFQTLDPRI…GSVHYELLID (252 aa)) lie on the Extracellular side of the membrane. 2 disulfide bridges follow: C153–C165 and C175–C189. N180 and N206 each carry an N-linked (GlcNAc...) asparagine glycan. An intrachain disulfide couples C241 to C298.

It belongs to the X(+)/potassium ATPases subunit beta family. As to quaternary structure, the sodium/potassium-transporting ATPase is composed of a catalytic alpha subunit, an auxiliary non-catalytic beta subunit and an additional regulatory subunit. In terms of tissue distribution, in embryos, it is expressed in the neurons of the CNS and PNS, in Garland cells and posterior spiracles. In adults, it shows a nervous system specific distribution: optic lobes, brain, thoracic ganglia and axonal pathways in the leg. Both isoforms concentrate in the adult head, isoform 2.2 being predominant. Both isoforms are weakly expressed in the thorax and very poorly expressed in the abdomen.

Its subcellular location is the cell membrane. In terms of biological role, this is the non-catalytic component of the active enzyme, which catalyzes the hydrolysis of ATP coupled with the exchange of Na(+) and K(+) ions across the plasma membrane. The beta subunit regulates, through assembly of alpha/beta heterodimers, the number of sodium pumps transported to the plasma membrane. The protein is Sodium/potassium-transporting ATPase subunit beta-2 (nrv2) of Drosophila melanogaster (Fruit fly).